The following is a 363-amino-acid chain: G kinase-anchoring protein 1-B (363 aa).

Disordered stretches follow at residues 17–79 (ALLK…RNLA) and 147–182 (VNGD…VPLK). A coiled-coil region spans residues 50-79 (KTNVNEKKKEKRRKKKEQQQSEANELRNLA). Positions 160-170 (KVNKKDKRKNN) are enriched in basic residues. Coiled-coil stretches lie at residues 249-298 (DGKT…QEGE) and 328-348 (AALE…VRYQ).

Belongs to the GKAP1 family.

It localises to the golgi apparatus. Functionally, may play a role in the regulation of insulin-dependent IRS1 tyrosine phosphorylation in adipocytes. The protein is G kinase-anchoring protein 1-B (gkap1-b) of Xenopus laevis (African clawed frog).